Reading from the N-terminus, the 368-residue chain is Tubby-like F-box protein 2 (368 aa).

The segment covering 1-17 has biased composition (low complexity); the sequence is MVPWRRSSSSSSAPSSR. The interval 1 to 44 is disordered; the sequence is MVPWRRSSSSSSAPSSRPARRPARTNARVSPDVSSELSPLAGEE. Positions 49-104 constitute an F-box domain; it reads ERWSALVPDLLADILRCVEAGSERWPPRRDVVACASVCRRWRDVAVAVVQPPLESG.

It belongs to the TUB family. Expressed in stems, leaves, flowers and seeds.

This Oryza sativa subsp. japonica (Rice) protein is Tubby-like F-box protein 2 (TULP2).